We begin with the raw amino-acid sequence, 318 residues long: Transaldolase (318 aa).

Lysine 132 functions as the Schiff-base intermediate with substrate in the catalytic mechanism.

It belongs to the transaldolase family. Type 1 subfamily. In terms of assembly, homodimer.

It localises to the cytoplasm. It catalyses the reaction D-sedoheptulose 7-phosphate + D-glyceraldehyde 3-phosphate = D-erythrose 4-phosphate + beta-D-fructose 6-phosphate. The protein operates within carbohydrate degradation; pentose phosphate pathway; D-glyceraldehyde 3-phosphate and beta-D-fructose 6-phosphate from D-ribose 5-phosphate and D-xylulose 5-phosphate (non-oxidative stage): step 2/3. Its function is as follows. Transaldolase is important for the balance of metabolites in the pentose-phosphate pathway. In Shewanella loihica (strain ATCC BAA-1088 / PV-4), this protein is Transaldolase.